A 140-amino-acid polypeptide reads, in one-letter code: MGLHAYPKAARLTKTDEFSSVFALRPVRRSRHFVLYVRANGDRPARLGVVIGKKFAKRAVERNLIKRQCRELFRLRQPLLGGRDVLIRLQAKFPRQDVPTVAAFKRICREELAQLFEVATRPLSAPPAATPPQPTAGSTP.

This sequence belongs to the RnpA family. In terms of assembly, consists of a catalytic RNA component (M1 or rnpB) and a protein subunit.

It catalyses the reaction Endonucleolytic cleavage of RNA, removing 5'-extranucleotides from tRNA precursor.. Its function is as follows. RNaseP catalyzes the removal of the 5'-leader sequence from pre-tRNA to produce the mature 5'-terminus. It can also cleave other RNA substrates such as 4.5S RNA. The protein component plays an auxiliary but essential role in vivo by binding to the 5'-leader sequence and broadening the substrate specificity of the ribozyme. The polypeptide is Ribonuclease P protein component (Ralstonia pickettii (strain 12J)).